The primary structure comprises 450 residues: Glutamate--tRNA ligase 2 (450 aa).

A 'HIGH' region motif is present at residues 10 to 20 (PSPTGRIHIGN). The short motif at 243–247 (GFSKR) is the 'KMSKS' region element. Lys-246 provides a ligand contact to ATP.

It belongs to the class-I aminoacyl-tRNA synthetase family. Glutamate--tRNA ligase type 1 subfamily. As to quaternary structure, monomer.

It is found in the cytoplasm. The catalysed reaction is tRNA(Glu) + L-glutamate + ATP = L-glutamyl-tRNA(Glu) + AMP + diphosphate. In terms of biological role, catalyzes the attachment of glutamate to tRNA(Glu) in a two-step reaction: glutamate is first activated by ATP to form Glu-AMP and then transferred to the acceptor end of tRNA(Glu). The protein is Glutamate--tRNA ligase 2 of Beijerinckia indica subsp. indica (strain ATCC 9039 / DSM 1715 / NCIMB 8712).